The primary structure comprises 618 residues: DNA mismatch repair protein MutL (618 aa).

This sequence belongs to the DNA mismatch repair MutL/HexB family.

Its function is as follows. This protein is involved in the repair of mismatches in DNA. It is required for dam-dependent methyl-directed DNA mismatch repair. May act as a 'molecular matchmaker', a protein that promotes the formation of a stable complex between two or more DNA-binding proteins in an ATP-dependent manner without itself being part of a final effector complex. The sequence is that of DNA mismatch repair protein MutL from Porphyromonas gingivalis (strain ATCC BAA-308 / W83).